Here is a 238-residue protein sequence, read N- to C-terminus: tRNA (guanine-N(1)-)-methyltransferase (238 aa).

S-adenosyl-L-methionine is bound by residues glycine 110 and 129–134; that span reads LGDFIL.

The protein belongs to the RNA methyltransferase TrmD family. Homodimer.

It is found in the cytoplasm. It carries out the reaction guanosine(37) in tRNA + S-adenosyl-L-methionine = N(1)-methylguanosine(37) in tRNA + S-adenosyl-L-homocysteine + H(+). In terms of biological role, specifically methylates guanosine-37 in various tRNAs. In Clostridium botulinum (strain Alaska E43 / Type E3), this protein is tRNA (guanine-N(1)-)-methyltransferase.